We begin with the raw amino-acid sequence, 168 residues long: Photosystem I assembly protein Ycf3 (168 aa).

TPR repeat units lie at residues 35–68, 72–105, and 120–153; these read AFTYYRDGMSAQSEGNYAEALQNYYEAMRLEIDP, SYILYNIGLIHTSNGEHTKALEYYFRALERNPFL, and GEQAIQQGDSEIAEAWFDQAAEYWKQAIALTPGN.

This sequence belongs to the Ycf3 family.

Its subcellular location is the plastid. It localises to the chloroplast thylakoid membrane. Essential for the assembly of the photosystem I (PSI) complex. May act as a chaperone-like factor to guide the assembly of the PSI subunits. The polypeptide is Photosystem I assembly protein Ycf3 (Solanum lycopersicum (Tomato)).